The sequence spans 174 residues: Transcriptional repressor NrdR (174 aa).

Residues Cys3–Cys34 fold into a zinc finger. The ATP-cone domain maps to Leu49–Lys139. Residues Glu151–Met174 form a disordered region. Positions Asn155–Met174 are enriched in polar residues.

Belongs to the NrdR family. Zn(2+) is required as a cofactor.

Its function is as follows. Negatively regulates transcription of bacterial ribonucleotide reductase nrd genes and operons by binding to NrdR-boxes. The sequence is that of Transcriptional repressor NrdR from Chloroflexus aggregans (strain MD-66 / DSM 9485).